The sequence spans 98 residues: Large ribosomal subunit protein uL23 (98 aa).

It belongs to the universal ribosomal protein uL23 family. In terms of assembly, part of the 50S ribosomal subunit. Contacts protein L29, and trigger factor when it is bound to the ribosome.

One of the early assembly proteins it binds 23S rRNA. One of the proteins that surrounds the polypeptide exit tunnel on the outside of the ribosome. Forms the main docking site for trigger factor binding to the ribosome. This is Large ribosomal subunit protein uL23 from Nitrosococcus oceani (strain ATCC 19707 / BCRC 17464 / JCM 30415 / NCIMB 11848 / C-107).